Reading from the N-terminus, the 490-residue chain is Hexokinase (490 aa).

In terms of domain architecture, Hexokinase spans 21–466 (QNLLEHIKHF…SGVGAALIAA (446 aa)). Positions 75–209 (DGKETGTFLA…GLPIKVAALI (135 aa)) are hexokinase small subdomain. Residues 210–455 (NDTTGTLIAS…DKVTIHAAED (246 aa)) are hexokinase large subdomain.

This sequence belongs to the hexokinase family. As to quaternary structure, monomer.

The enzyme catalyses a D-hexose + ATP = a D-hexose 6-phosphate + ADP + H(+). It carries out the reaction D-fructose + ATP = D-fructose 6-phosphate + ADP + H(+). It catalyses the reaction D-glucose + ATP = D-glucose 6-phosphate + ADP + H(+). It participates in carbohydrate metabolism; hexose metabolism. The protein operates within carbohydrate degradation; glycolysis; D-glyceraldehyde 3-phosphate and glycerone phosphate from D-glucose: step 1/4. Catalyzes the phosphorylation of hexose, such as D-glucose and D-fructose, to hexose 6-phosphate (D-glucose 6-phosphate and D-fructose 6-phosphate, respectively). Mediates the initial step of glycolysis by catalyzing phosphorylation of D-glucose to D-glucose 6-phosphate. This chain is Hexokinase (hxkA), found in Emericella nidulans (strain FGSC A4 / ATCC 38163 / CBS 112.46 / NRRL 194 / M139) (Aspergillus nidulans).